The primary structure comprises 590 residues: Asparagine synthetase [glutamine-hydrolyzing] (590 aa).

C2 (for GATase activity) is an active-site residue. The Glutamine amidotransferase type-2 domain occupies 2 to 185 (CGILAVLGCS…PGNLYSSRSG (184 aa)). L-glutamine-binding positions include 50 to 54 (RLAII), 75 to 77 (NGE), and D98. In terms of domain architecture, Asparagine synthetase spans 193 to 516 (PQWYNETIPS…PQNSARFTVP (324 aa)). ATP is bound by residues L231, V267, and 341 to 342 (SG).

It catalyses the reaction L-aspartate + L-glutamine + ATP + H2O = L-asparagine + L-glutamate + AMP + diphosphate + H(+). The protein operates within amino-acid biosynthesis; L-asparagine biosynthesis; L-asparagine from L-aspartate (L-Gln route): step 1/1. This Asparagus officinalis (Garden asparagus) protein is Asparagine synthetase [glutamine-hydrolyzing].